The primary structure comprises 468 residues: N-acetyltransferase SLI1 (468 aa).

The protein resides in the endoplasmic reticulum. Confers resistance to the sphingolipid biosynthesis inhibitor drug myriocin (ISP-1). Inactivates ISP-1 by converting it into N-acetyl-myriocin. Cooperates with YPK1 in mediating resistance to myriocin. The sequence is that of N-acetyltransferase SLI1 (SLI1) from Saccharomyces cerevisiae (strain ATCC 204508 / S288c) (Baker's yeast).